The chain runs to 469 residues: Ufm1-specific protease 2 (469 aa).

At methionine 1 the chain carries N-acetylmethionine. Active-site residues include cysteine 302, aspartate 426, and histidine 428.

The protein belongs to the peptidase C78 family.

It localises to the endoplasmic reticulum. The protein resides in the cytoplasm. The protein localises to the nucleus. Functionally, thiol-dependent isopeptidase that specifically cleaves UFM1, a ubiquitin-like modifier protein, from conjugated proteins, such as CD274/PD-L1, CYB5R3, DDRGK1, MRE11, RPL26/uL24, TRIP4 and RPL26/uL24. While it is also able to mediate the processing of UFM1 precursors, a prerequisite for conjugation reactions, UFSP2 mainly acts as a protein deUFMylase that mediates deconjugation of UFM1 from target proteins. Mediates deUFMylation of RPL26/uL24, a critical step to release the UFM1 ribosome E3 ligase (UREL) complex during the recycling of 60S ribosome subunits from the endoplasmic reticulum. Catalyzes deUFMylation of TRIP4, regulating intracellular nuclear receptors transactivation and thereby regulate cell proliferation and differentiation. In Pongo abelii (Sumatran orangutan), this protein is Ufm1-specific protease 2.